A 131-amino-acid polypeptide reads, in one-letter code: Sec-independent protein translocase protein TatB (131 aa).

A helical membrane pass occupies residues 2–22 (LGSLSWEHMLVLVVVGLVVLG). The interval 96 to 131 (AFDRPVNGAAAQPPPAPAPPPEPHRPGQTPFDADAT) is disordered. Pro residues predominate over residues 107–116 (QPPPAPAPPP).

It belongs to the TatB family. The Tat system comprises two distinct complexes: a TatABC complex, containing multiple copies of TatA, TatB and TatC subunits, and a separate TatA complex, containing only TatA subunits. Substrates initially bind to the TatABC complex, which probably triggers association of the separate TatA complex to form the active translocon.

It is found in the cell membrane. Functionally, part of the twin-arginine translocation (Tat) system that transports large folded proteins containing a characteristic twin-arginine motif in their signal peptide across membranes. Together with TatC, TatB is part of a receptor directly interacting with Tat signal peptides. TatB may form an oligomeric binding site that transiently accommodates folded Tat precursor proteins before their translocation. The protein is Sec-independent protein translocase protein TatB of Mycobacterium avium (strain 104).